Consider the following 302-residue polypeptide: Glutamate/aspartate import solute-binding protein (302 aa).

A signal peptide spans methionine 1–alanine 22.

It belongs to the bacterial solute-binding protein 3 family. In terms of assembly, the complex is composed of two ATP-binding proteins (GltL), two transmembrane proteins (GltJ and GltK) and a solute-binding protein (GltI).

It localises to the periplasm. In terms of biological role, part of the ABC transporter complex GltIJKL involved in glutamate and aspartate uptake. Binds to both glutamate and aspartate. In Escherichia coli (strain K12), this protein is Glutamate/aspartate import solute-binding protein (gltI).